The following is a 159-amino-acid chain: Ribosomal RNA large subunit methyltransferase H (159 aa).

S-adenosyl-L-methionine-binding positions include Leu-76, Gly-108, and Phe-127–Phe-132.

The protein belongs to the RNA methyltransferase RlmH family. In terms of assembly, homodimer.

It is found in the cytoplasm. The enzyme catalyses pseudouridine(1915) in 23S rRNA + S-adenosyl-L-methionine = N(3)-methylpseudouridine(1915) in 23S rRNA + S-adenosyl-L-homocysteine + H(+). Specifically methylates the pseudouridine at position 1915 (m3Psi1915) in 23S rRNA. The sequence is that of Ribosomal RNA large subunit methyltransferase H from Halothermothrix orenii (strain H 168 / OCM 544 / DSM 9562).